The primary structure comprises 520 residues: Ribonuclease Y (520 aa).

A helical membrane pass occupies residues isoleucine 3–leucine 23. The span at arginine 81–serine 118 shows a compositional bias: basic and acidic residues. Residues arginine 81–glutamine 125 form a disordered region. Positions threonine 210 to leucine 273 constitute a KH domain. The HD domain maps to glycine 336–alanine 429.

Belongs to the RNase Y family.

It is found in the cell membrane. In terms of biological role, endoribonuclease that initiates mRNA decay. The protein is Ribonuclease Y of Oceanobacillus iheyensis (strain DSM 14371 / CIP 107618 / JCM 11309 / KCTC 3954 / HTE831).